The chain runs to 302 residues: Deoxyhypusine hydroxylase-B (302 aa).

5 HEAT-like PBS-type repeats span residues 49–75 (LAHE…VLKD), 82–108 (VRHE…SLAV), 171–200 (MYER…LGVK), 204–230 (LRHE…VLKN), and 237–263 (VRHE…FAKD). 4 residues coordinate Fe cation: His-51, Glu-52, His-84, and Glu-85. Fe cation-binding residues include His-206, Glu-207, His-239, and Glu-240.

It belongs to the deoxyhypusine hydroxylase family. Fe(2+) serves as cofactor.

It catalyses the reaction [eIF5A protein]-deoxyhypusine + AH2 + O2 = [eIF5A protein]-hypusine + A + H2O. It participates in protein modification; eIF5A hypusination. Functionally, catalyzes the hydroxylation of the N(6)-(4-aminobutyl)-L-lysine intermediate to form hypusine, an essential post-translational modification only found in mature eIF-5A factor. This Oryza sativa subsp. japonica (Rice) protein is Deoxyhypusine hydroxylase-B.